A 282-amino-acid chain; its full sequence is HTH-type transcriptional activator RhaR (282 aa).

The HTH araC/xylS-type domain maps to 179 to 277; the sequence is DKLITALANS…GMTPSQWRHL (99 aa). 2 DNA-binding regions (H-T-H motif) span residues 196–217 and 244–267; these read DAFCQQEQCSERVLRQQFRAQT and ISEISMQCGFEDSNYFSVVFTRET.

As to quaternary structure, binds DNA as a dimer.

The protein localises to the cytoplasm. Functionally, activates expression of the rhaSR operon in response to L-rhamnose. This Salmonella schwarzengrund (strain CVM19633) protein is HTH-type transcriptional activator RhaR.